The chain runs to 144 residues: MGTPVKILVVRNHILFSVVVLLAVAQSSYLPPCEPVNETVAVEKEGCPKCLVLQTTICSGHCLTKEPVYKSPFSTVYQHVCTYRDVRYETVRLPDCPPGVDPHITYPVALSCDCSLCTMDTSDCTIESLQPDFCMSQREDFLVY.

A signal peptide spans 1 to 27; the sequence is MGTPVKILVVRNHILFSVVVLLAVAQS. 6 cysteine pairs are disulfide-bonded: cysteine 33/cysteine 81, cysteine 47/cysteine 96, cysteine 50/cysteine 134, cysteine 58/cysteine 112, cysteine 62/cysteine 114, and cysteine 117/cysteine 124. Residue asparagine 37 is glycosylated (N-linked (GlcNAc...) asparagine). A propeptide spanning residues 143-144 is cleaved from the precursor; the sequence is VY.

Belongs to the glycoprotein hormones subunit beta family. In terms of assembly, heterodimer of an alpha and a beta chain.

It localises to the secreted. Involved in gametogenesis and steroidogenesis. This Cyprinus carpio (Common carp) protein is Gonadotropin subunit beta-2 (cgbb).